The sequence spans 207 residues: MSPTQEQLTALGGVFLAAVLVDKIAKTGQVTEAGLTCMLGSLLIRDPKDTLEVYGGDDLALREGYRALIGALERDPSTLQREPLRYALSMLGLERQLAKREDMLEVIGKRLPQIQSQVEHFGPAHENVVAACGALYQDTLSTLRQRIQVHGDMRNLQQPNNASKIRALLLAGIRSARLWRQLGGHRWQLVISRRKLLKELYPLMRNE.

This sequence belongs to the HflD family.

The protein resides in the cytoplasm. It is found in the cell inner membrane. In Pseudomonas fluorescens (strain SBW25), this protein is High frequency lysogenization protein HflD homolog.